A 374-amino-acid polypeptide reads, in one-letter code: 1,3,6,8-tetrahydroxynaphthalene synthase (374 aa).

Cysteine 138 is a catalytic residue.

This sequence belongs to the thiolase-like superfamily. Chalcone/stilbene synthases family. As to quaternary structure, homodimer.

It carries out the reaction 5 malonyl-CoA + 5 H(+) = naphthalene-1,3,6,8-tetrol + 5 CO2 + 5 CoA + H2O. Its pathway is pigment biosynthesis; melanin biosynthesis. Functionally, involved in the biosynthesis of melanin but also various secondary metabolites containing a naphthoquinone ring. Catalyzes the iterative condensation of five CoA-linked malonyl units to form a pentaketide intermediate. THNS subsequently catalyzes the dual intramolecular Claisen and aldol condensations of this linear intermediate to produce the fused ring of 1,3,6,8-tetrahydroxynaphthalene (THN). This Streptomyces coelicolor (strain ATCC BAA-471 / A3(2) / M145) protein is 1,3,6,8-tetrahydroxynaphthalene synthase.